The primary structure comprises 170 residues: Putative 3-methyladenine DNA glycosylase (170 aa).

This sequence belongs to the DNA glycosylase MPG family.

The polypeptide is Putative 3-methyladenine DNA glycosylase (Sodalis glossinidius).